Here is a 1030-residue protein sequence, read N- to C-terminus: Putative pentatricopeptide repeat-containing protein At5g06400, mitochondrial (1030 aa).

A mitochondrion-targeting transit peptide spans 1-77 (MKALFRFKSC…VKLDETTRLR (77 aa)). 19 PPR repeats span residues 188 to 222 (RVGIYNTMLSIAGEARNLDMVDELVSEMEKNGCDK), 223 to 257 (DIRTWTILISVYGKAKKIGKGLLVFEKMRKSGFEL), 258 to 292 (DATAYNIMIRSLCIAGRGDLALEFYKEMMEKGITF), 293 to 323 (GLRTYKMLLDCIAKSEKVDVVQSIADDMVRI), 328 to 362 (EHDAFGYLLKSFCVSGKIKEALELIRELKNKEMCL), 363 to 393 (DAKYFEILVKGLCRANRMVDALEIVDIMKRR), 397 to 431 (DSNVYGIIISGYLRQNDVSKALEQFEVIKKSGRPP), 432 to 466 (RVSTYTEIMQHLFKLKQFEKGCNLFNEMIENGIEP), 467 to 501 (DSVAITAVVAGHLGQNRVAEAWKVFSSMEEKGIKP), 502 to 536 (TWKSYSIFVKELCRSSRYDEIIKIFNQMHASKIVI), 677 to 711 (NSEAYNMSIKVAGCGKDFKQMRSLFYEMRRQGCLI), 712 to 746 (TQDTWAIMIMQYGRTGLTNIAIRTFKEMKDMGLIP), 747 to 783 (SSSTFKCLITVLCEKKGRNVEEATRTFREMIRSGFVP), 784 to 814 (DRELVQDYLGCLCEVGNTKDAKSCLDSLGKI), 818 to 852 (VTVAYSIYIRALCRIGKLEEALSELASFEGERSLL), 853 to 887 (DQYTYGSIVHGLLQRGDLQKALDKVNSMKEIGTKP), 888 to 922 (GVHVYTSLIVYFFKEKQLEKVLETCQKMEGESCEP), 923 to 957 (SVVTYTAMICGYMSLGKVEEAWNAFRNMEERGTSP), and 958 to 992 (DFKTYSKFINCLCQACKSEDALKLLSEMLDKGIAP).

It belongs to the PPR family. P subfamily.

The protein resides in the mitochondrion. This Arabidopsis thaliana (Mouse-ear cress) protein is Putative pentatricopeptide repeat-containing protein At5g06400, mitochondrial.